The primary structure comprises 301 residues: Protoheme IX farnesyltransferase (301 aa).

A run of 9 helical transmembrane segments spans residues 29–49, 51–71, 101–121, 123–143, 150–170, 177–197, 223–243, 244–264, and 281–301; these read VVAL…PGAV, LQPL…AAAF, AFSF…WWVN, LTAW…TAYL, NIVI…TAVT, ALLL…ALAI, CILL…LVGM, SGPV…YKAW, and FSIY…YLWG.

This sequence belongs to the UbiA prenyltransferase family. Protoheme IX farnesyltransferase subfamily.

Its subcellular location is the cell inner membrane. The enzyme catalyses heme b + (2E,6E)-farnesyl diphosphate + H2O = Fe(II)-heme o + diphosphate. Its pathway is porphyrin-containing compound metabolism; heme O biosynthesis; heme O from protoheme: step 1/1. Functionally, converts heme B (protoheme IX) to heme O by substitution of the vinyl group on carbon 2 of heme B porphyrin ring with a hydroxyethyl farnesyl side group. The polypeptide is Protoheme IX farnesyltransferase (Shewanella denitrificans (strain OS217 / ATCC BAA-1090 / DSM 15013)).